Consider the following 135-residue polypeptide: Large ribosomal subunit protein uL16c (135 aa).

The protein belongs to the universal ribosomal protein uL16 family. Part of the 50S ribosomal subunit.

It is found in the plastid. The chain is Large ribosomal subunit protein uL16c from Epifagus virginiana (Beechdrops).